The chain runs to 152 residues: ALK and LTK ligand 1 (152 aa).

The first 23 residues, 1–23 (MRAEKRWHILLSMILLLITSSQC), serve as a signal peptide directing secretion. Intrachain disulfides connect C113–C149 and C127–C136.

Belongs to the ALKAL family. As to expression, expressed at low level in the notochord and iridophore stripes, the eye and the swim bladder.

It localises to the secreted. The protein localises to the cell membrane. Cytokine that acts as a physiological ligand for receptor tyrosine kinases LTK and ALK. Required for iridophore development in the adult eye by acting as a receptor for LTK. The sequence is that of ALK and LTK ligand 1 from Danio rerio (Zebrafish).